Consider the following 251-residue polypeptide: Probable transcriptional regulatory protein MSMEG_2940/MSMEI_2866 (251 aa).

It belongs to the TACO1 family.

It is found in the cytoplasm. The chain is Probable transcriptional regulatory protein MSMEG_2940/MSMEI_2866 from Mycolicibacterium smegmatis (strain ATCC 700084 / mc(2)155) (Mycobacterium smegmatis).